Here is a 157-residue protein sequence, read N- to C-terminus: Secreted effector protein See1 (157 aa).

The signal sequence occupies residues 1–21 (MLFTTFVSLLLVILCLVHVSA). Residues 124–157 (SYRYGDSHGNSREAEYSVADHQSASGEYKFGPTT) form a disordered region. A compositionally biased stretch (basic and acidic residues) spans 128–138 (GDSHGNSREAE).

In terms of assembly, interacts with a maize homolog of SGT1, a factor acting in cell cycle progression in yeast Saccharomyces cerevisiae and an important component of plant and human innate immunity.

It localises to the secreted. Its subcellular location is the host cytoplasm. The protein localises to the host nucleus. Effector protein involved in the induction of tumors in infected plant tissues by the fungus. Required for the reactivation of plant DNA synthesis, which is crucial for tumor progression in leaf cells. Interferes with the MAPK-triggered phosphorylation of maize SGT1 at a monocot-specific phosphorylation site, resulting in both modulation of immune responses and reactivation of DNA synthesis during leaf tumor formation. The protein is Secreted effector protein See1 of Mycosarcoma maydis (Corn smut fungus).